Reading from the N-terminus, the 673-residue chain is Bifunctional polymyxin resistance protein ArnA (673 aa).

The formyltransferase ArnAFT stretch occupies residues methionine 1–leucine 311. The active-site Proton donor; for formyltransferase activity is histidine 104. (6R)-10-formyltetrahydrofolate-binding positions include arginine 114 and valine 136–aspartate 140. Positions arginine 321 to glycine 673 are dehydrogenase ArnADH. NAD(+) is bound by residues aspartate 354 and aspartate 375 to isoleucine 376. UDP-alpha-D-glucuronate contacts are provided by residues alanine 400, tyrosine 405, and threonine 439–serine 440. Glutamate 441 acts as the Proton acceptor; for decarboxylase activity in catalysis. Residues arginine 467, asparagine 499, lysine 533–arginine 542, and tyrosine 620 each bind UDP-alpha-D-glucuronate. Residue arginine 626 is the Proton donor; for decarboxylase activity of the active site.

This sequence in the N-terminal section; belongs to the Fmt family. UDP-L-Ara4N formyltransferase subfamily. It in the C-terminal section; belongs to the NAD(P)-dependent epimerase/dehydratase family. UDP-glucuronic acid decarboxylase subfamily. In terms of assembly, homohexamer, formed by a dimer of trimers.

The enzyme catalyses UDP-alpha-D-glucuronate + NAD(+) = UDP-beta-L-threo-pentopyranos-4-ulose + CO2 + NADH. The catalysed reaction is UDP-4-amino-4-deoxy-beta-L-arabinose + (6R)-10-formyltetrahydrofolate = UDP-4-deoxy-4-formamido-beta-L-arabinose + (6S)-5,6,7,8-tetrahydrofolate + H(+). It participates in nucleotide-sugar biosynthesis; UDP-4-deoxy-4-formamido-beta-L-arabinose biosynthesis; UDP-4-deoxy-4-formamido-beta-L-arabinose from UDP-alpha-D-glucuronate: step 1/3. It functions in the pathway nucleotide-sugar biosynthesis; UDP-4-deoxy-4-formamido-beta-L-arabinose biosynthesis; UDP-4-deoxy-4-formamido-beta-L-arabinose from UDP-alpha-D-glucuronate: step 3/3. Its pathway is bacterial outer membrane biogenesis; lipopolysaccharide biosynthesis. Functionally, bifunctional enzyme that catalyzes the oxidative decarboxylation of UDP-glucuronic acid (UDP-GlcUA) to UDP-4-keto-arabinose (UDP-Ara4O) and the addition of a formyl group to UDP-4-amino-4-deoxy-L-arabinose (UDP-L-Ara4N) to form UDP-L-4-formamido-arabinose (UDP-L-Ara4FN). The modified arabinose is attached to lipid A and is required for resistance to polymyxin and cationic antimicrobial peptides. The sequence is that of Bifunctional polymyxin resistance protein ArnA from Pectobacterium atrosepticum (strain SCRI 1043 / ATCC BAA-672) (Erwinia carotovora subsp. atroseptica).